We begin with the raw amino-acid sequence, 971 residues long: Piwi-like protein 2 (971 aa).

Arginine 45 bears the Symmetric dimethylarginine mark. Arginine 74 is modified (omega-N-methylarginine; by PRMT5; alternate). Arginine 74 bears the Symmetric dimethylarginine; by PRMT5; alternate mark. Position 83 is an omega-N-methylarginine; alternate (arginine 83). Arginine 83 and arginine 95 each carry symmetric dimethylarginine; alternate. Residue arginine 95 is modified to Omega-N-methylarginine; by PRMT5; alternate. Symmetric dimethylarginine; by PRMT5; alternate is present on arginine 100. Arginine 100 bears the Omega-N-methylarginine; alternate mark. The interval 102 to 124 (LSANMVRKDREEPRSSLPDPSVL) is disordered. Symmetric dimethylarginine occurs at positions 144 and 156. The segment at 159-200 (SSIGRGMDKPPSAFGLTARDPPRLPQPPALSPTSLHSADPPP) is disordered. Position 163 is a symmetric dimethylarginine; by PRMT5 (arginine 163). The PAZ domain occupies 387 to 500 (SVLDVMHAIY…LLPELSFMTG (114 aa)). Symmetric dimethylarginine; by PRMT5 is present on arginine 549. One can recognise a Piwi domain in the interval 666 to 957 (MVVCIIMGTR…LAFLSGQILH (292 aa)). Residues aspartate 743, glutamate 781, aspartate 813, and histidine 946 contribute to the active site.

Belongs to the argonaute family. Piwi subfamily. Interacts with DDX4, MAEL, EIF3A, EIF4E, EIF4G, PRMT5 and WDR77. Associates with EIF4E- and EIF4G-containing m7G cap-binding complexes. Interacts (when methylated on arginine residues) with TDRD1 and TDRKH/TDRD2. Interacts with TDRD12. Component of the PET complex, at least composed of EXD1, PIWIL2, TDRD12 and piRNAs. Interacts with MOV10L1. Interacts with GPAT2. Interacts with Tex19.1 and, probably, Tex19.2. Interacts (via PIWI domain) with BMAL1 and CLOCK. Interacts with GSK3B. Interacts with TEX15. It depends on Mg(2+) as a cofactor. In terms of processing, arginine methylation by PRMT5 is required for the interaction with Tudor domain-containing protein TDRD1 and subsequent localization to the meiotic nuage, also named P granule. As to expression, expressed in adult testis, specifically in spermatocytes and in spermatogonia. Only detected in primordial germ cells of both sexes. Widely expressed in tumors. Also present at early stages of oocyte growth. Present in the mitotic spermatogonia. Not detected in the first stages of meiosis (preleptotene and leptotene). Detected at the late zygotene stage and increases throughout pachytene, declining from this stage onward until expression stops at the early round spermatid stage (at protein level).

Its subcellular location is the cytoplasm. In terms of biological role, endoribonuclease that plays a central role during spermatogenesis by repressing transposable elements and preventing their mobilization, which is essential for the germline integrity. Plays an essential role in meiotic differentiation of spermatocytes, germ cell differentiation and in self-renewal of spermatogonial stem cells. Its presence in oocytes suggests that it may participate in similar functions during oogenesis in females. Acts via the piRNA metabolic process, which mediates the repression of transposable elements during meiosis by forming complexes composed of piRNAs and Piwi proteins and govern the methylation and subsequent repression of transposons. During piRNA biosynthesis, plays a key role in the piRNA amplification loop, also named ping-pong amplification cycle, by acting as a 'slicer-competent' piRNA endoribonuclease that cleaves primary piRNAs, which are then loaded onto 'slicer-incompetent' PIWIL4. PIWIL2 slicing produces a pre-miRNA intermediate, which is then processed in mature piRNAs, and as well as a 16 nucleotide by-product that is degraded. Required for PIWIL4/MIWI2 nuclear localization and association with secondary piRNAs antisense. Besides their function in transposable elements repression, piRNAs are probably involved in other processes during meiosis such as translation regulation. Indirectly modulates expression of genes such as PDGFRB, SLC2A1, ITGA6, GJA7, THY1, CD9 and STRA8. Represses circadian rhythms by promoting the stability and activity of core clock components BMAL1 and CLOCK by inhibiting GSK3B-mediated phosphorylation and ubiquitination-dependent degradation of these proteins. The sequence is that of Piwi-like protein 2 from Mus musculus (Mouse).